The sequence spans 298 residues: Probable phosphite transport system-binding protein HtxB (298 aa).

The N-terminal stretch at 1–33 (MQVFTLFSKFKKALTRAILAFIATIIVCTPAQA) is a signal peptide.

The protein belongs to the phosphate/phosphite/phosphonate binding protein family.

Probably forms part of a binding-protein-dependent hypophosphite transporter. The protein is Probable phosphite transport system-binding protein HtxB (htxB) of Stutzerimonas stutzeri (Pseudomonas stutzeri).